The primary structure comprises 349 residues: 4-hydroxy-tetrahydrodipicolinate reductase 2, chloroplastic (349 aa).

The N-terminal 53 residues, 1-53 (MAANGLMAASSVFLHRPVHPHFSFSSRTNQMVPLGFKGRVSFIGNVKRCFPVV), are a transit peptide targeting the chloroplast. NAD(+) is bound by residues 81 to 86 (GCSGKM), 173 to 175 (GTT), and 196 to 199 (SPQM). Catalysis depends on histidine 232, which acts as the Proton donor/acceptor. Lysine 236 acts as the Proton donor in catalysis. A (S)-2,3,4,5-tetrahydrodipicolinate-binding site is contributed by 241-242 (GT).

It belongs to the DapB family.

Its subcellular location is the plastid. The protein localises to the chloroplast. It carries out the reaction (S)-2,3,4,5-tetrahydrodipicolinate + NAD(+) + H2O = (2S,4S)-4-hydroxy-2,3,4,5-tetrahydrodipicolinate + NADH + H(+). The catalysed reaction is (S)-2,3,4,5-tetrahydrodipicolinate + NADP(+) + H2O = (2S,4S)-4-hydroxy-2,3,4,5-tetrahydrodipicolinate + NADPH + H(+). The protein operates within amino-acid biosynthesis; L-lysine biosynthesis via DAP pathway; (S)-tetrahydrodipicolinate from L-aspartate: step 4/4. In terms of biological role, catalyzes the conversion of 4-hydroxy-tetrahydrodipicolinate (HTPA) to tetrahydrodipicolinate. The polypeptide is 4-hydroxy-tetrahydrodipicolinate reductase 2, chloroplastic (DAPB2) (Arabidopsis thaliana (Mouse-ear cress)).